Reading from the N-terminus, the 219-residue chain is Casein kinase II subunit beta' (219 aa).

At T2 the chain carries Phosphothreonine; by autocatalysis.

Belongs to the casein kinase 2 subunit beta family. In terms of assembly, tetramer of two alpha and two beta' subunits. In terms of processing, phosphorylated by alpha subunit.

Functionally, participates in Wnt signaling. Plays a complex role in regulating the basal catalytic activity of the alpha subunit. This Drosophila melanogaster (Fruit fly) protein is Casein kinase II subunit beta' (CkIIbeta2).